Consider the following 141-residue polypeptide: Nucleoside diphosphate kinase (141 aa).

Lysine 11, phenylalanine 59, arginine 87, threonine 93, arginine 104, and asparagine 114 together coordinate ATP. The Pros-phosphohistidine intermediate role is filled by histidine 117.

Belongs to the NDK family. As to quaternary structure, homotetramer. Mg(2+) is required as a cofactor.

The protein localises to the cytoplasm. The enzyme catalyses a 2'-deoxyribonucleoside 5'-diphosphate + ATP = a 2'-deoxyribonucleoside 5'-triphosphate + ADP. It catalyses the reaction a ribonucleoside 5'-diphosphate + ATP = a ribonucleoside 5'-triphosphate + ADP. Major role in the synthesis of nucleoside triphosphates other than ATP. The ATP gamma phosphate is transferred to the NDP beta phosphate via a ping-pong mechanism, using a phosphorylated active-site intermediate. The protein is Nucleoside diphosphate kinase of Vibrio vulnificus (strain CMCP6).